A 171-amino-acid polypeptide reads, in one-letter code: Translationally-controlled tumor protein homolog (171 aa).

The TCTP domain occupies 1–171 (MIIYKDIITG…FKDGLEIEKC (171 aa)).

This sequence belongs to the TCTP family.

The protein resides in the cytoplasm. Functionally, involved in calcium binding and microtubule stabilization. The sequence is that of Translationally-controlled tumor protein homolog (tpt1) from Danio rerio (Zebrafish).